A 410-amino-acid chain; its full sequence is Cysteine desulfurase IscS (410 aa).

Pyridoxal 5'-phosphate is bound by residues 80 to 81 (AT), N160, Q188, and 208 to 210 (SGH). An N6-(pyridoxal phosphate)lysine modification is found at K211. Pyridoxal 5'-phosphate is bound at residue T248. Residue C334 is the Cysteine persulfide intermediate of the active site. C334 lines the [2Fe-2S] cluster pocket.

It belongs to the class-V pyridoxal-phosphate-dependent aminotransferase family. NifS/IscS subfamily. As to quaternary structure, homodimer. Forms a heterotetramer with IscU, interacts with other sulfur acceptors. Requires pyridoxal 5'-phosphate as cofactor.

The protein localises to the cytoplasm. The catalysed reaction is (sulfur carrier)-H + L-cysteine = (sulfur carrier)-SH + L-alanine. It functions in the pathway cofactor biosynthesis; iron-sulfur cluster biosynthesis. Its function is as follows. Master enzyme that delivers sulfur to a number of partners involved in Fe-S cluster assembly, tRNA modification or cofactor biosynthesis. Catalyzes the removal of elemental sulfur atoms from cysteine to produce alanine. Functions as a sulfur delivery protein for Fe-S cluster synthesis onto IscU, an Fe-S scaffold assembly protein, as well as other S acceptor proteins. The protein is Cysteine desulfurase IscS of Rickettsia peacockii (strain Rustic).